Consider the following 521-residue polypeptide: Jacalin-related lectin 38 (521 aa).

Positions 2–48 (MQPDHDLPYDLEGEILSHLPIQILARFRCVCKRWNTLFKERRFFNSD) constitute an F-box domain. Kelch repeat units follow at residues 145-190 (KHYK…PYSV), 326-373 (YIYI…ITQH), and 486-521 (MSFV…SPLP). Positions 377–519 (SRFAPLRGIQ…LTAFGVHFSP (143 aa)) constitute a Jacalin-type lectin domain.

It belongs to the jacalin lectin family.

This chain is Jacalin-related lectin 38 (JAL38), found in Arabidopsis thaliana (Mouse-ear cress).